A 96-amino-acid polypeptide reads, in one-letter code: Large ribosomal subunit protein bL28 (96 aa).

Residues 1-22 (MSRRCELTGKGPMTGNNVSHAN) form a disordered region.

This sequence belongs to the bacterial ribosomal protein bL28 family.

This Ruegeria sp. (strain TM1040) (Silicibacter sp.) protein is Large ribosomal subunit protein bL28.